The chain runs to 342 residues: DNA-directed RNA polymerase subunit alpha (342 aa).

Positions 1–239 (MTTFLAKNWS…DQLQVFINFQ (239 aa)) are alpha N-terminal domain (alpha-NTD). Residues 254–342 (INPVLLKKVY…SLAKKHEDQY (89 aa)) form an alpha C-terminal domain (alpha-CTD) region.

This sequence belongs to the RNA polymerase alpha chain family. As to quaternary structure, homodimer. The RNAP catalytic core consists of 2 alpha, 1 beta, 1 beta' and 1 omega subunit. When a sigma factor is associated with the core the holoenzyme is formed, which can initiate transcription.

The enzyme catalyses RNA(n) + a ribonucleoside 5'-triphosphate = RNA(n+1) + diphosphate. In terms of biological role, DNA-dependent RNA polymerase catalyzes the transcription of DNA into RNA using the four ribonucleoside triphosphates as substrates. The polypeptide is DNA-directed RNA polymerase subunit alpha (Orientia tsutsugamushi (strain Ikeda) (Rickettsia tsutsugamushi)).